The primary structure comprises 442 residues: Mannosylglycerate hydrolase (442 aa).

Residues tyrosine 38, 42–45, tyrosine 90, glutamine 116, and glycine 176 contribute to the substrate site; that span reads WSWD. The Proton donor role is filled by aspartate 178. Substrate contacts are provided by residues arginine 213 and 369-370; that span reads YW. The active-site Proton acceptor is the glutamate 413.

It belongs to the glycosyl hydrolase 63 family. In terms of assembly, homodimer in solution.

The enzyme catalyses (2R)-2-O-(alpha-D-mannosyl)-glycerate + H2O = D-mannose + (R)-glycerate. The catalysed reaction is (2R)-2-O-(alpha-D-glucopyranosyl)-glycerate + H2O = (R)-glycerate + D-glucose. Its activity is regulated as follows. Activity is not stimulated by divalent cations and not affected in the presence of EDTA. In terms of biological role, hydrolase that catalyzes the hydrolysis of mannosylglycerate (MG), a solute produced in response to osmotic stress in thermophiles, into mannose and glycerate. Can also hydrolyze glucosylglycerate (GG) to glucose and glycerate, with similar catalytic efficiency. Is highly specific for MG and GG, and cannot use mannosylglyceramide (MGA), glucosylglycerol, mannosylglucosylglycerate (MGG), glucosylglucosylglycerate (GGG) or trehalose as substrates. The chain is Mannosylglycerate hydrolase from Rubrobacter radiotolerans (Arthrobacter radiotolerans).